The following is a 23-amino-acid chain: Acidic phospholipase A2 CHA-E6b (23 aa).

The protein belongs to the phospholipase A2 family. Group II subfamily. D49 sub-subfamily. The cofactor is Ca(2+). Contains 7 disulfide bonds. As to expression, expressed by the venom gland.

It localises to the secreted. It carries out the reaction a 1,2-diacyl-sn-glycero-3-phosphocholine + H2O = a 1-acyl-sn-glycero-3-phosphocholine + a fatty acid + H(+). Snake venom phospholipase A2 (PLA2) that shows high lipolytic (1200 umol/mg/min) and weak ADP-induced platelet aggregation activities. Also shows weak anticoagulant activity (IC(50) of about 1.0 uM). PLA2 catalyzes the calcium-dependent hydrolysis of the 2-acyl groups in 3-sn-phosphoglycerides. The chain is Acidic phospholipase A2 CHA-E6b from Crotalus horridus (Timber rattlesnake).